Consider the following 446-residue polypeptide: Chromosomal replication initiator protein DnaA (446 aa).

Residues Met1 to Pro92 are domain I, interacts with DnaA modulators. The tract at residues Pro93–Ser109 is domain II. A domain III, AAA+ region region spans residues Met110–Ser326. Residues Gly154, Gly156, Lys157, and Thr158 each coordinate ATP. The domain IV, binds dsDNA stretch occupies residues Ser327–Lys446.

The protein belongs to the DnaA family. Oligomerizes as a right-handed, spiral filament on DNA at oriC.

Its subcellular location is the cytoplasm. Plays an essential role in the initiation and regulation of chromosomal replication. ATP-DnaA binds to the origin of replication (oriC) to initiate formation of the DNA replication initiation complex once per cell cycle. Binds the DnaA box (a 9 base pair repeat at the origin) and separates the double-stranded (ds)DNA. Forms a right-handed helical filament on oriC DNA; dsDNA binds to the exterior of the filament while single-stranded (ss)DNA is stabiized in the filament's interior. The ATP-DnaA-oriC complex binds and stabilizes one strand of the AT-rich DNA unwinding element (DUE), permitting loading of DNA polymerase. After initiation quickly degrades to an ADP-DnaA complex that is not apt for DNA replication. Binds acidic phospholipids. The sequence is that of Chromosomal replication initiator protein DnaA from Bacillus cereus (strain 03BB102).